The primary structure comprises 148 residues: MITIEDLKPTPGSNKKYKRLGRGQGSGKGKTAGKGHKGQKSRGTGKVRAWMEGGQTPLHRRLPKFGFKNFTKKFYAVVNLETLEEKFDSNAVVTPEVLIEKGIIDKIYDGVKILARGEITKPLTVKAHKFSEKAKEKIEKVGGKIEVI.

The tract at residues 1–46 is disordered; sequence MITIEDLKPTPGSNKKYKRLGRGQGSGKGKTAGKGHKGQKSRGTGK. Over residues 31-45 the composition is skewed to basic residues; sequence TAGKGHKGQKSRGTG.

It belongs to the universal ribosomal protein uL15 family. In terms of assembly, part of the 50S ribosomal subunit.

Its function is as follows. Binds to the 23S rRNA. The chain is Large ribosomal subunit protein uL15 from Fervidobacterium nodosum (strain ATCC 35602 / DSM 5306 / Rt17-B1).